The following is a 176-amino-acid chain: Ribosome maturation factor RimM (176 aa).

Residues 97-176 (DSEFYHRDLI…QILVDWDPDF (80 aa)) form the PRC barrel domain.

Belongs to the RimM family. In terms of assembly, binds ribosomal protein uS19.

The protein resides in the cytoplasm. Functionally, an accessory protein needed during the final step in the assembly of 30S ribosomal subunit, possibly for assembly of the head region. Essential for efficient processing of 16S rRNA. May be needed both before and after RbfA during the maturation of 16S rRNA. It has affinity for free ribosomal 30S subunits but not for 70S ribosomes. In Shewanella frigidimarina (strain NCIMB 400), this protein is Ribosome maturation factor RimM.